The sequence spans 56 residues: MGHQQLYWSHPRKFGQGSRSCRVCSNRHGLIRKYGLNMCRQCFRQYAKDIGFVKLD.

Residues C21, C24, C39, and C42 each contribute to the Zn(2+) site.

Belongs to the universal ribosomal protein uS14 family. Component of the 40S small ribosomal subunit. Zn(2+) serves as cofactor.

It localises to the cytoplasm. The protein localises to the cytosol. The protein resides in the rough endoplasmic reticulum. In terms of biological role, component of the small ribosomal subunit. The ribosome is a large ribonucleoprotein complex responsible for the synthesis of proteins in the cell. The sequence is that of Small ribosomal subunit protein uS14 (rps29) from Hippocampus comes (Tiger tail seahorse).